The chain runs to 513 residues: Light-independent protochlorophyllide reductase subunit B (513 aa).

D36 contributes to the [4Fe-4S] cluster binding site. The active-site Proton donor is D299. Substrate is bound at residue 434-435; that stretch reads GM.

It belongs to the ChlB/BchB/BchZ family. In terms of assembly, protochlorophyllide reductase is composed of three subunits; ChlL, ChlN and ChlB. Forms a heterotetramer of two ChlB and two ChlN subunits. [4Fe-4S] cluster serves as cofactor.

It localises to the plastid. The protein localises to the chloroplast. The catalysed reaction is chlorophyllide a + oxidized 2[4Fe-4S]-[ferredoxin] + 2 ADP + 2 phosphate = protochlorophyllide a + reduced 2[4Fe-4S]-[ferredoxin] + 2 ATP + 2 H2O. It participates in porphyrin-containing compound metabolism; chlorophyll biosynthesis (light-independent). Its function is as follows. Component of the dark-operative protochlorophyllide reductase (DPOR) that uses Mg-ATP and reduced ferredoxin to reduce ring D of protochlorophyllide (Pchlide) to form chlorophyllide a (Chlide). This reaction is light-independent. The NB-protein (ChlN-ChlB) is the catalytic component of the complex. This Zygnema circumcarinatum (Green alga) protein is Light-independent protochlorophyllide reductase subunit B.